Consider the following 136-residue polypeptide: Large ribosomal subunit protein uL22 (136 aa).

Belongs to the universal ribosomal protein uL22 family. Part of the 50S ribosomal subunit.

In terms of biological role, this protein binds specifically to 23S rRNA; its binding is stimulated by other ribosomal proteins, e.g. L4, L17, and L20. It is important during the early stages of 50S assembly. It makes multiple contacts with different domains of the 23S rRNA in the assembled 50S subunit and ribosome. Functionally, the globular domain of the protein is located near the polypeptide exit tunnel on the outside of the subunit, while an extended beta-hairpin is found that lines the wall of the exit tunnel in the center of the 70S ribosome. This is Large ribosomal subunit protein uL22 from Bacteroides fragilis (strain YCH46).